Here is a 553-residue protein sequence, read N- to C-terminus: Zinc finger protein 324A (553 aa).

The 72-residue stretch at 1-72 (MAFEDVAVYF…SGTDTTLSRT (72 aa)) folds into the KRAB domain. Residues 130–135 (PSRERK) carry the Nuclear localization signal motif. The interval 186-221 (GRQPRTPERQKPCAQEVPGRTFGSAQDLEAAGGRGH) is disordered. 9 consecutive C2H2-type zinc fingers follow at residues 257–279 (FECR…LRTH), 285–307 (YECA…QRIH), 313–335 (YACP…QRIH), 341–363 (FRCS…RKIH), 369–391 (YACA…ERTH), 397–419 (FVCA…QRVH), 425–447 (FACP…QLLH), 453–475 (FRCV…RRIH), and 481–503 (FVCT…QRIH). The segment at 502–553 (IHTGEKTVRRSRASLHPQARSVAGASSEGAPAKETEPTPASGPAAVSQPAEV) is disordered.

This sequence belongs to the krueppel C2H2-type zinc-finger protein family. In terms of tissue distribution, expressed at high levels in the spleen, thymus, and PBMC, at low levels in the prostate, ovary, small intestine, colon (mucosal lining), placenta, lung, and pancreas, and very weakly expressed in the liver and kidney.

Its subcellular location is the nucleus. Its function is as follows. May be involved in transcriptional regulation. May be involved in regulation of cell proliferation. The sequence is that of Zinc finger protein 324A (ZNF324) from Homo sapiens (Human).